The chain runs to 369 residues: Methionine aminopeptidase 1B, chloroplastic (369 aa).

The transit peptide at 1–61 directs the protein to the chloroplast; sequence MASSVFLSSF…YSPRQFHVSA (61 aa). Histidine 199 is a substrate binding site. A divalent metal cation-binding residues include aspartate 216, aspartate 227, and histidine 290. Histidine 297 lines the substrate pocket. Residues glutamate 322 and glutamate 353 each coordinate a divalent metal cation.

The protein belongs to the peptidase M24A family. Methionine aminopeptidase type 1 subfamily. The cofactor is Co(2+). Zn(2+) is required as a cofactor. Mn(2+) serves as cofactor. Requires Fe(2+) as cofactor. Ubiquitous. Preferentially expressed in green tissues.

It localises to the plastid. The protein localises to the chloroplast. It catalyses the reaction Release of N-terminal amino acids, preferentially methionine, from peptides and arylamides.. Removes the N-terminal methionine from nascent proteins. The N-terminal methionine is often cleaved when the second residue in the primary sequence is small and uncharged (Met-Ala-, Cys, Gly, Pro, Ser, Thr, or Val). The protein is Methionine aminopeptidase 1B, chloroplastic (MAP1B) of Arabidopsis thaliana (Mouse-ear cress).